Consider the following 60-residue polypeptide: U-actitoxin-Avd12b (60 aa).

The signal sequence occupies residues 1–6; it reads SKEGMS. Residues 7-12 constitute a propeptide that is removed on maturation; it reads YEEPEN. One can recognise an EGF-like domain in the interval 14–56; the sequence is EGVACTGQYAESFCLNGGTCRYIQSIGEYYCICVGDYTGHRCE. Disulfide bonds link C18-C33, C27-C44, and C46-C55.

Belongs to the EGF domain peptide family.

It is found in the secreted. The protein resides in the nematocyst. Its function is as follows. Has both toxic and EGF activity. Its EGF activity consists of rounding cells (morphological change) and inducing tyrosine phosphorylation of the EGFR in A431 cells, but with a lower potency that human EGF. The sequence is that of U-actitoxin-Avd12b from Anemonia viridis (Snakelocks anemone).